Here is a 431-residue protein sequence, read N- to C-terminus: 3-phosphoshikimate 1-carboxyvinyltransferase (431 aa).

The 3-phosphoshikimate site is built by Lys-21, Ser-22, and Arg-26. Lys-21 lines the phosphoenolpyruvate pocket. 2 residues coordinate phosphoenolpyruvate: Gly-93 and Arg-121. 3-phosphoshikimate is bound by residues Ser-166, Gln-168, Ser-192, Asp-317, and Lys-344. Gln-168 is a binding site for phosphoenolpyruvate. Asp-317 acts as the Proton acceptor in catalysis. Phosphoenolpyruvate contacts are provided by Arg-348 and Arg-390.

The protein belongs to the EPSP synthase family. As to quaternary structure, monomer.

It localises to the cytoplasm. The enzyme catalyses 3-phosphoshikimate + phosphoenolpyruvate = 5-O-(1-carboxyvinyl)-3-phosphoshikimate + phosphate. Its pathway is metabolic intermediate biosynthesis; chorismate biosynthesis; chorismate from D-erythrose 4-phosphate and phosphoenolpyruvate: step 6/7. In terms of biological role, catalyzes the transfer of the enolpyruvyl moiety of phosphoenolpyruvate (PEP) to the 5-hydroxyl of shikimate-3-phosphate (S3P) to produce enolpyruvyl shikimate-3-phosphate and inorganic phosphate. The protein is 3-phosphoshikimate 1-carboxyvinyltransferase of Herpetosiphon aurantiacus (strain ATCC 23779 / DSM 785 / 114-95).